The primary structure comprises 257 residues: 3-methyl-2-oxobutanoate hydroxymethyltransferase (257 aa).

The Mg(2+) site is built by Asp42 and Asp86. Residues 42–43 (DS), Asp86, and Lys116 contribute to the 3-methyl-2-oxobutanoate site. Position 118 (Glu118) interacts with Mg(2+). Glu185 acts as the Proton acceptor in catalysis.

This sequence belongs to the PanB family. Homodecamer; pentamer of dimers. The cofactor is Mg(2+).

It localises to the cytoplasm. The enzyme catalyses 3-methyl-2-oxobutanoate + (6R)-5,10-methylene-5,6,7,8-tetrahydrofolate + H2O = 2-dehydropantoate + (6S)-5,6,7,8-tetrahydrofolate. It functions in the pathway cofactor biosynthesis; (R)-pantothenate biosynthesis; (R)-pantoate from 3-methyl-2-oxobutanoate: step 1/2. Catalyzes the reversible reaction in which hydroxymethyl group from 5,10-methylenetetrahydrofolate is transferred onto alpha-ketoisovalerate to form ketopantoate. This is 3-methyl-2-oxobutanoate hydroxymethyltransferase from Prochlorococcus marinus (strain MIT 9215).